A 144-amino-acid polypeptide reads, in one-letter code: 3-hydroxyacyl-[acyl-carrier-protein] dehydratase FabZ (144 aa).

The active site involves H51.

Belongs to the thioester dehydratase family. FabZ subfamily.

It is found in the cytoplasm. The catalysed reaction is a (3R)-hydroxyacyl-[ACP] = a (2E)-enoyl-[ACP] + H2O. Its function is as follows. Involved in unsaturated fatty acids biosynthesis. Catalyzes the dehydration of short chain beta-hydroxyacyl-ACPs and long chain saturated and unsaturated beta-hydroxyacyl-ACPs. This chain is 3-hydroxyacyl-[acyl-carrier-protein] dehydratase FabZ, found in Lactococcus lactis subsp. cremoris (strain SK11).